Here is a 396-residue protein sequence, read N- to C-terminus: Acetate kinase (396 aa).

Asn-7 provides a ligand contact to Mg(2+). Lys-14 lines the ATP pocket. Position 88 (Arg-88) interacts with substrate. Asp-145 functions as the Proton donor/acceptor in the catalytic mechanism. Residues 205–209 (HLGNG), 279–281 (DFR), and 327–331 (GIGEN) contribute to the ATP site. Mg(2+) is bound at residue Glu-381.

The protein belongs to the acetokinase family. Homodimer. The cofactor is Mg(2+). Mn(2+) serves as cofactor.

It is found in the cytoplasm. The enzyme catalyses acetate + ATP = acetyl phosphate + ADP. It functions in the pathway metabolic intermediate biosynthesis; acetyl-CoA biosynthesis; acetyl-CoA from acetate: step 1/2. Functionally, catalyzes the formation of acetyl phosphate from acetate and ATP. Can also catalyze the reverse reaction. The polypeptide is Acetate kinase (Campylobacter jejuni (strain RM1221)).